The primary structure comprises 384 residues: F-box only protein 5 (384 aa).

The tract at residues E25–Q67 is disordered. Residues A45–E54 show a composition bias toward polar residues. A compositionally biased stretch (basic and acidic residues) spans S55–Q67. The 48-residue stretch at C187 to W234 folds into the F-box domain. The ZBR-type zinc-finger motif lies at S311 to T359. Residues C315, C318, C333, C338, C343, C346, H351, and C356 each coordinate Zn(2+).

As to quaternary structure, part of a SCF (SKP1-cullin-F-box) protein ligase complex.

It is found in the nucleus. The protein localises to the cytoplasm. Its pathway is protein modification; protein ubiquitination. Functionally, during embryonic development, regulates the integrity of the genome and therefore the cell cycle progression by preventing rereplication through an APC-Cdh1-dependent mechanism. The protein is F-box only protein 5 of Danio rerio (Zebrafish).